The following is a 300-amino-acid chain: Haloalkane dehalogenase (300 aa).

The 124-residue stretch at 32-155 (AIVFQHGNPT…PAVRGVFQGF (124 aa)) folds into the AB hydrolase-1 domain. Asp109 functions as the Nucleophile in the catalytic mechanism. Residue Glu133 is the Proton donor of the active site. The active-site Proton acceptor is the His273.

Belongs to the haloalkane dehalogenase family. Type 2 subfamily. In terms of assembly, monomer.

The catalysed reaction is 1-haloalkane + H2O = a halide anion + a primary alcohol + H(+). In terms of biological role, catalyzes hydrolytic cleavage of carbon-halogen bonds in halogenated aliphatic compounds, leading to the formation of the corresponding primary alcohols, halide ions and protons. In Mycobacterium bovis (strain ATCC BAA-935 / AF2122/97), this protein is Haloalkane dehalogenase.